A 526-amino-acid chain; its full sequence is MSVRFSSNSRQYSSARSGGGGGGGGGGSSIRVSSTKSSLGGGYSSGGFSGGSFSRGSSSGGCFGGSSGGYGGFGGGSFGGGYGGGSFGGGYGGGSFGGGYGGGSFGGGYGGGSFGGGSFGGGSFGGGSFGGGLGGDGGGLLSGNEKVTMQNLNDRLASYMNKVRDLEESNYELEGKIKEWYEKHGNSSQREPRDYSKYYKTIEDLKGQIVNLTTDNANVLLQIDNARLAADDFRLKYENEVALRQSVEADINGLRRVLDELTLSKADLEMQIESLTEELAYLKKNHEEEMKDLQNVSTGDVNVEMNAAPGVDLTQLLNNMRNQYEQLAEKNRKDAEAWFNEKSKELTTEIDSNIEQMSSHKSEITELRRTVQGLEIELQSQLALKQSLEASLAETEGRYCVQLSQIQSQISALEEQLQQIRAETECQNAEYQQLLDIKTRLENEIQTYRSLLEGEGGYVGNLQITLNCFPSEFHLAKLTQTQGKTRGWKGSNTNKTRVIKTIIEEVTPEGRVLSSMIESETKKHFY.

Residues 1-16 (MSVRFSSNSRQYSSAR) show a composition bias toward low complexity. Positions 1-40 (MSVRFSSNSRQYSSARSGGGGGGGGGGSSIRVSSTKSSLG) are disordered. Residues 1–144 (MSVRFSSNSR…GDGGGLLSGN (144 aa)) are head. Phosphoserine occurs at positions 17, 38, 49, 52, and 169. Residues 17-28 (SGGGGGGGGGGS) are compositionally biased toward gly residues. The coil 1A stretch occupies residues 145 to 180 (EKVTMQNLNDRLASYMNKVRDLEESNYELEGKIKEW). One can recognise an IF rod domain in the interval 145-459 (EKVTMQNLND…SLLEGEGGYV (315 aa)). Residues 181 to 201 (YEKHGNSSQREPRDYSKYYKT) form a linker 1 region. A coil 1B region spans residues 202–293 (IEDLKGQIVN…KNHEEEMKDL (92 aa)). A linker 12 region spans residues 294–316 (QNVSTGDVNVEMNAAPGVDLTQL). The segment at 317 to 455 (LNNMRNQYEQ…QTYRSLLEGE (139 aa)) is coil 2. The tail stretch occupies residues 456–526 (GGYVGNLQIT…IESETKKHFY (71 aa)).

The protein belongs to the intermediate filament family. As to quaternary structure, heterotetramer of two type I and two type II keratins. Heterodimer with KRT1. Two heterodimers of KRT1 and KRT10 form a heterotetramer. The KRT10 subunit in the heterotetramer is probably disulfide-linked.

The protein localises to the secreted. It localises to the extracellular space. Its subcellular location is the cell surface. It is found in the cytoplasm. Its function is as follows. Plays a role in the establishment of the epidermal barrier on plantar skin. Involved in the maintenance of cell layer development and keratin filament bundles in suprabasal cells of the epithelium. In Rattus norvegicus (Rat), this protein is Keratin, type I cytoskeletal 10.